A 376-amino-acid polypeptide reads, in one-letter code: Bifunctional enzyme IspD/IspF (376 aa).

Positions 1 to 220 (MRIAAILVAG…RSMSISMIPR (220 aa)) are 2-C-methyl-D-erythritol 4-phosphate cytidylyltransferase. Positions 220–376 (RIGTGYDVHA…QAAVIIMIPA (157 aa)) are 2-C-methyl-D-erythritol 2,4-cyclodiphosphate synthase. Asp226 and His228 together coordinate a divalent metal cation. 4-CDP-2-C-methyl-D-erythritol 2-phosphate contacts are provided by residues 226 to 228 (DVH) and 252 to 253 (HS). A divalent metal cation is bound at residue His260. 4-CDP-2-C-methyl-D-erythritol 2-phosphate contacts are provided by residues 274-276 (DIG), 350-353 (TTSE), Phe357, and Arg360.

In the N-terminal section; belongs to the IspD/TarI cytidylyltransferase family. IspD subfamily. The protein in the C-terminal section; belongs to the IspF family. It depends on a divalent metal cation as a cofactor.

The catalysed reaction is 2-C-methyl-D-erythritol 4-phosphate + CTP + H(+) = 4-CDP-2-C-methyl-D-erythritol + diphosphate. It carries out the reaction 4-CDP-2-C-methyl-D-erythritol 2-phosphate = 2-C-methyl-D-erythritol 2,4-cyclic diphosphate + CMP. It participates in isoprenoid biosynthesis; isopentenyl diphosphate biosynthesis via DXP pathway; isopentenyl diphosphate from 1-deoxy-D-xylulose 5-phosphate: step 2/6. Its pathway is isoprenoid biosynthesis; isopentenyl diphosphate biosynthesis via DXP pathway; isopentenyl diphosphate from 1-deoxy-D-xylulose 5-phosphate: step 4/6. Functionally, bifunctional enzyme that catalyzes the formation of 4-diphosphocytidyl-2-C-methyl-D-erythritol from CTP and 2-C-methyl-D-erythritol 4-phosphate (MEP) (IspD), and catalyzes the conversion of 4-diphosphocytidyl-2-C-methyl-D-erythritol 2-phosphate (CDP-ME2P) to 2-C-methyl-D-erythritol 2,4-cyclodiphosphate (ME-CPP) with a corresponding release of cytidine 5-monophosphate (CMP) (IspF). In Granulibacter bethesdensis (strain ATCC BAA-1260 / CGDNIH1), this protein is Bifunctional enzyme IspD/IspF.